The following is a 463-amino-acid chain: Probable Xaa-Pro aminopeptidase pepP (463 aa).

Asp-259, Asp-270, Glu-393, and Glu-433 together coordinate Mn(2+).

Belongs to the peptidase M24B family. Requires Mn(2+) as cofactor.

The enzyme catalyses Release of any N-terminal amino acid, including proline, that is linked to proline, even from a dipeptide or tripeptide.. In terms of biological role, catalyzes the removal of a penultimate prolyl residue from the N-termini of peptides. The protein is Probable Xaa-Pro aminopeptidase pepP (pepP) of Pyrenophora teres f. teres (strain 0-1) (Barley net blotch fungus).